The chain runs to 178 residues: Large ribosomal subunit protein uL6 (178 aa).

Belongs to the universal ribosomal protein uL6 family. In terms of assembly, part of the 50S ribosomal subunit.

Its function is as follows. This protein binds to the 23S rRNA, and is important in its secondary structure. It is located near the subunit interface in the base of the L7/L12 stalk, and near the tRNA binding site of the peptidyltransferase center. In Exiguobacterium sibiricum (strain DSM 17290 / CCUG 55495 / CIP 109462 / JCM 13490 / 255-15), this protein is Large ribosomal subunit protein uL6.